The sequence spans 1016 residues: Kinesin-like protein KIN-14K (1016 aa).

One can recognise a Calponin-homology (CH) domain in the interval 14–121 (ADRRAEVIEW…CLLVLRESVS (108 aa)). A disordered region spans residues 123–176 (GLRDGTSKAPLRKKWRVPETGEPLVPGVAQGKTSPGEDKRNGLPDPKSQQKTPI). Residues 288 to 354 (VNGTNEENQM…EVMTSMHEQQ (67 aa)) adopt a coiled-coil conformation. The Kinesin motor domain occupies 481–808 (NIRVYCRVRP…LKFAERVSGV (328 aa)). Residue 565–572 (GQTGSGKT) participates in ATP binding. Residues 820-852 (KDIKELLEQVASLKDTIVRKDTEIEQLQLMKDK) are a coiled coil. 2 stretches are compositionally biased toward polar residues: residues 884-893 (NQQSQLSDPQ) and 990-1004 (KTPNQTRVQSSQLIG). Disordered regions lie at residues 884–912 (NQQSQLSDPQSYAEVNRDGGPTSYTDITP) and 971–1016 (LTKN…RWQK).

This sequence belongs to the TRAFAC class myosin-kinesin ATPase superfamily. Kinesin family. KIN-14 subfamily.

This Oryza sativa subsp. japonica (Rice) protein is Kinesin-like protein KIN-14K.